Reading from the N-terminus, the 389-residue chain is NADH-quinone oxidoreductase subunit D (389 aa).

Belongs to the complex I 49 kDa subunit family. In terms of assembly, NDH-1 is composed of 14 different subunits. Subunits NuoB, C, D, E, F, and G constitute the peripheral sector of the complex.

Its subcellular location is the cell inner membrane. The enzyme catalyses a quinone + NADH + 5 H(+)(in) = a quinol + NAD(+) + 4 H(+)(out). Its function is as follows. NDH-1 shuttles electrons from NADH, via FMN and iron-sulfur (Fe-S) centers, to quinones in the respiratory chain. The immediate electron acceptor for the enzyme in this species is believed to be ubiquinone. Couples the redox reaction to proton translocation (for every two electrons transferred, four hydrogen ions are translocated across the cytoplasmic membrane), and thus conserves the redox energy in a proton gradient. The sequence is that of NADH-quinone oxidoreductase subunit D from Rickettsia typhi (strain ATCC VR-144 / Wilmington).